A 711-amino-acid polypeptide reads, in one-letter code: MREPALAASAMAYHPFHAPRPADFPMSAFLAAAQPSFFPALALPPGALGKPLPDPGLAGAAAAAAAAAAAAEAGLHVSALGPHPPAAHLRSLKSLEPEDEVEDDPKVTLEAKELWDQFHKLGTEMVITKSGRRMFPPFKVRVSGLDKKAKYILLMDIVAADDCRYKFHNSRWMVAGKADPEMPKRMYIHPDSPATGEQWMAKPVAFHKLKLTNNISDKHGFTILNSMHKYQPRFHIVRANDILKLPYSTFRTYVFPETDFIAVTAYQNDKITQLKIDNNPFAKGFRDTGNGRREKRKQLTLPTLRLYEEHCKPERDGAESDASSCDPPPAREPPPSPSAAPSPLRLHRARAEEKPGAADSDPEPERTGEERSAAPLGRSPSRDASPARLTEPERSRERRSPERCSKEPTEGGGDGPFSLRSLEKERPEARRKDEGRKDVGEGKEPSLAPLVVQTDSASPLGAGHLPGLAFSSHLHGQQFFGPLGAGQPLFLHPGQFAMGPGAFSAMGMGHLLASVAGGSGSSGGAGPGTAAGLDAGGLGPAASAASTAAPFPFHLSQHMLASQGIPMPTFGGLFPYPYTYMAAAAAAASALPATSAAAAAAAAAGSLSRSPFLGSARPRLRFSPYQIPVTIPPSTSLLTTGLAAEGSKGGNSREPSPLPELALRKVGGPSRGALSPSGSAKEAASELQSIQRLVSGLESQRALSPGRESPK.

Positions 109–287 (LEAKELWDQF…NNPFAKGFRD (179 aa)) form a DNA-binding region, T-box. Positions 313-449 (PERDGAESDA…GEGKEPSLAP (137 aa)) are disordered. The segment covering 326–340 (DPPPAREPPPSPSAA) has biased composition (pro residues). Phosphoserine is present on residues Ser336, Ser342, and Ser360. Composition is skewed to basic and acidic residues over residues 363–372 (EPERTGEERS), 390–409 (TEPE…KEPT), and 421–444 (SLEK…EGKE). The tract at residues 518 to 602 (GSGSSGGAGP…ATSAAAAAAA (85 aa)) is repression domain 1 (RD1). Phosphoserine is present on residues Ser623, Ser652, Ser656, and Ser675. A disordered region spans residues 640 to 687 (TGLAAEGSKGGNSREPSPLPELALRKVGGPSRGALSPSGSAKEAASEL).

In terms of assembly, binds DNA as a monomer. Interacts with CHD4, HDAC1 and HDAC2, perhaps as components of a NuRD-like complex. Interacts with CBX3, HMGB2 and PBX1. Interacts with PML. Phosphorylated. May be phosphorylated by p38 MAPK in response to UV irradiation stress. In adults, highest levels in lung. Also found in heart, kidney, and ovary.

Its subcellular location is the nucleus. Transcription factor which acts as a transcriptional repressor. May also function as a transcriptional activator. Binds to the palindromic T site 5'-TTCACACCTAGGTGTGAA-3' DNA sequence, or a half-site, which are present in the regulatory region of several genes. Required for cardiac atrioventricular canal formation. May cooperate with NKX2.5 to negatively modulate expression of NPPA/ANF in the atrioventricular canal. May play a role as a positive regulator of TGFB2 expression, perhaps acting in concert with GATA4 in the developing outflow tract myocardium. Plays a role in limb pattern formation. Acts as a transcriptional repressor of ADAM10 gene expression, perhaps in concert with histone deacetylase HDAC1 as cofactor. Involved in branching morphogenesis in both developing lungs and adult mammary glands, via negative modulation of target genes; acting redundantly with TBX3. Required, together with TBX3, to maintain cell proliferation in the embryonic lung mesenchyme; perhaps acting downstream of SHH, BMP and TGFbeta signaling. Involved in modulating early inner ear development, acting independently of, and also redundantly with TBX3, in different subregions of the developing ear. Acts as a negative regulator of PML function in cellular senescence. Acts as a negative regulator of expression of CDKN1A/p21, IL33 and CCN4; repression of CDKN1A is enhanced in response to UV-induced stress, perhaps as a result of phosphorylation by p38 MAPK. Negatively modulates expression of CDKN2A/p19ARF and CDH1/E-cadherin. Plays a role in induction of the epithelial-mesenchymal transition (EMT). Plays a role in melanocyte proliferation, perhaps via regulation of cyclin CCND1. Involved in melanogenesis, acting via negative modulation of expression of DHICA oxidase/TYRP1 and P protein/OCA2. Involved in regulating retinal pigment epithelium (RPE) cell proliferation, perhaps via negatively modulating transcription of the transcription factor CEBPD. In Mus musculus (Mouse), this protein is T-box transcription factor TBX2 (Tbx2).